Reading from the N-terminus, the 544-residue chain is 4-coumarate--CoA ligase 1 (544 aa).

Ser-190, Ser-191, Gly-192, Thr-193, Thr-194, and Lys-198 together coordinate ATP. Residue Tyr-240 participates in (E)-4-coumaroyl-AMP binding. CoA is bound at residue Lys-261. Residues 263–332 (DIVPFLELIQ…AKFPNAKLGQ (70 aa)) are SBD1. Residues Ala-310, Gln-332, Gly-333, Thr-337, and Met-345 each coordinate (E)-4-coumaroyl-AMP. ATP contacts are provided by Gln-332, Gly-333, and Thr-337. Residues 333–400 (GYGMTEAGPV…IRGDQIMKGY (68 aa)) are SBD2. Positions 421 and 436 each coordinate ATP. Positions 438 and 442 each coordinate (E)-4-coumaroyl-AMP. Positions 444 and 445 each coordinate CoA. Position 527 (Lys-527) interacts with ATP.

Belongs to the ATP-dependent AMP-binding enzyme family. It depends on Mg(2+) as a cofactor.

The catalysed reaction is (E)-4-coumarate + ATP + CoA = (E)-4-coumaroyl-CoA + AMP + diphosphate. The enzyme catalyses (E)-4-coumarate + ATP + H(+) = (E)-4-coumaroyl-AMP + diphosphate. It carries out the reaction (E)-4-coumaroyl-AMP + CoA = (E)-4-coumaroyl-CoA + AMP + H(+). Its pathway is phytoalexin biosynthesis; 3,4',5-trihydroxystilbene biosynthesis; 3,4',5-trihydroxystilbene from trans-4-coumarate: step 1/2. Its function is as follows. Carboxylate--CoA ligase that may use 4-coumarate as substrate. Follows a two-step reaction mechanism, wherein the carboxylate substrate first undergoes adenylation by ATP, followed by a thioesterification in the presence of CoA to yield the final CoA thioester. This Petroselinum crispum (Parsley) protein is 4-coumarate--CoA ligase 1 (4CL1).